We begin with the raw amino-acid sequence, 790 residues long: Cadherin-6 (790 aa).

Residues 1–18 (MRTYRYFLLLFWVGQPYP) form the signal peptide. Residues 19-53 (TFSTPLSKRTSGFPAKKRTLELSGNSKNELSRSKR) constitute a propeptide that is removed on maturation. Cadherin domains follow at residues 54 to 159 (SWMW…EPIF), 160 to 268 (TKEV…PPRF), 269 to 383 (PQST…PPVF), 384 to 486 (SKLA…DNPP), and 487 to 608 (EFAE…LVHP). Residues 54–615 (SWMWNQFFLL…VHPTGLSTGA (562 aa)) are Extracellular-facing. Asparagine 255 is a glycosylation site (N-linked (GlcNAc...) asparagine). The segment at 261-291 (VNDNPPRFPQSTYQFKTPESSPPGTPIGRIK) is disordered. Residues 269–279 (PQSTYQFKTPE) show a composition bias toward polar residues. Residues asparagine 399, asparagine 437, asparagine 455, and asparagine 536 are each glycosylated (N-linked (GlcNAc...) asparagine). Residues 616–636 (LIAILLCIVTLLVTVVLFAAL) traverse the membrane as a helical segment. At 637-790 (RRQRKKEPLI…YGGVDSDKDS (154 aa)) the chain is on the cytoplasmic side. Residues serine 786 and serine 790 each carry the phosphoserine modification.

The protein localises to the cell membrane. Functionally, cadherins are calcium-dependent cell adhesion proteins. They preferentially interact with themselves in a homophilic manner in connecting cells; cadherins may thus contribute to the sorting of heterogeneous cell types. In Bos taurus (Bovine), this protein is Cadherin-6 (CDH6).